A 694-amino-acid chain; its full sequence is Zinc finger BED domain-containing protein 5 (694 aa).

A BED-type zinc finger spans residues 109–165 (RKYDESYLSFGFTYFGNRDAPHAQCVLCKKILSNSSLAPSKLRRHLETKHAAYKDKD). Residues cysteine 133, cysteine 136, histidine 153, and histidine 158 each coordinate Zn(2+).

The protein is Zinc finger BED domain-containing protein 5 (ZBED5) of Canis lupus familiaris (Dog).